We begin with the raw amino-acid sequence, 635 residues long: UvrABC system protein C (635 aa).

Polar residues predominate over residues 1–14 (MAQNHMSETMNDIS). A disordered region spans residues 1-27 (MAQNHMSETMNDISAESPDQPEPPRTG). In terms of domain architecture, GIY-YIG spans 40-117 (SSPGVYRMLD…IKQLKPKYNV (78 aa)). Residues 227–262 (TKIQEELGAEMQAASEAMEYERAAALRDRIKALTQV) enclose the UVR domain.

The protein belongs to the UvrC family. Interacts with UvrB in an incision complex.

The protein resides in the cytoplasm. The UvrABC repair system catalyzes the recognition and processing of DNA lesions. UvrC both incises the 5' and 3' sides of the lesion. The N-terminal half is responsible for the 3' incision and the C-terminal half is responsible for the 5' incision. In Ruegeria sp. (strain TM1040) (Silicibacter sp.), this protein is UvrABC system protein C.